Reading from the N-terminus, the 78-residue chain is MFGSIIWSYNYTHYYFDPNAKTASANNDWIEQCGDFLKNGTVKCVVDKVYDWKDHKEAFSYMATQRAQGKLIMNVEKF.

This is an uncharacterized protein from Saccharomyces cerevisiae (strain ATCC 204508 / S288c) (Baker's yeast).